A 171-amino-acid chain; its full sequence is Large ribosomal subunit protein uL10 (171 aa).

The protein belongs to the universal ribosomal protein uL10 family. Part of the ribosomal stalk of the 50S ribosomal subunit. The N-terminus interacts with L11 and the large rRNA to form the base of the stalk. The C-terminus forms an elongated spine to which L12 dimers bind in a sequential fashion forming a multimeric L10(L12)X complex.

In terms of biological role, forms part of the ribosomal stalk, playing a central role in the interaction of the ribosome with GTP-bound translation factors. This Lactococcus lactis subsp. lactis (strain IL1403) (Streptococcus lactis) protein is Large ribosomal subunit protein uL10 (rplJ).